A 70-amino-acid chain; its full sequence is DNA gyrase inhibitor YacG (70 aa).

Zn(2+) is bound by residues C9, C12, C28, and C32. Residues 43–70 (ESRKIPGSSIDPESIVTSNNKQDNEDEQ) are disordered.

This sequence belongs to the DNA gyrase inhibitor YacG family. Interacts with GyrB. Zn(2+) serves as cofactor.

Functionally, inhibits all the catalytic activities of DNA gyrase by preventing its interaction with DNA. Acts by binding directly to the C-terminal domain of GyrB, which probably disrupts DNA binding by the gyrase. The sequence is that of DNA gyrase inhibitor YacG from Legionella pneumophila (strain Paris).